The chain runs to 207 residues: Lipid A acyltransferase PagP (207 aa).

An N-terminal signal peptide occupies residues 1–24 (MKFDLTAACTLSATLLVSSGTVFA). Catalysis depends on residues histidine 79, aspartate 122, and serine 123.

The protein belongs to the lipid A palmitoyltransferase family. In terms of assembly, homodimer.

The protein localises to the cell outer membrane. It catalyses the reaction a lipid A + a 1,2-diacyl-sn-glycero-3-phosphocholine = a hepta-acyl lipid A + a 2-acyl-sn-glycero-3-phosphocholine. The enzyme catalyses a lipid IVA + a 1,2-diacyl-sn-glycero-3-phosphocholine = a lipid IVB + a 2-acyl-sn-glycero-3-phosphocholine. The catalysed reaction is a lipid IIA + a 1,2-diacyl-sn-glycero-3-phosphocholine = a lipid IIB + a 2-acyl-sn-glycero-3-phosphocholine. Its function is as follows. Transfers a fatty acid residue from the sn-1 position of a phospholipid to the N-linked hydroxyfatty acid chain on the proximal unit of lipid A or its precursors. This is Lipid A acyltransferase PagP from Photorhabdus laumondii subsp. laumondii (strain DSM 15139 / CIP 105565 / TT01) (Photorhabdus luminescens subsp. laumondii).